The chain runs to 316 residues: 4-hydroxy-3-methylbut-2-enyl diphosphate reductase (316 aa).

Cys12 is a [4Fe-4S] cluster binding site. Positions 43 and 81 each coordinate (2E)-4-hydroxy-3-methylbut-2-enyl diphosphate. His43 and His81 together coordinate dimethylallyl diphosphate. Isopentenyl diphosphate-binding residues include His43 and His81. Residue Cys103 participates in [4Fe-4S] cluster binding. His131 contributes to the (2E)-4-hydroxy-3-methylbut-2-enyl diphosphate binding site. His131 contacts dimethylallyl diphosphate. Residue His131 participates in isopentenyl diphosphate binding. Glu133 acts as the Proton donor in catalysis. Residue Thr170 participates in (2E)-4-hydroxy-3-methylbut-2-enyl diphosphate binding. Cys198 is a [4Fe-4S] cluster binding site. 3 residues coordinate (2E)-4-hydroxy-3-methylbut-2-enyl diphosphate: Ser226, Asn228, and Ser271. Ser226, Asn228, and Ser271 together coordinate dimethylallyl diphosphate. Residues Ser226, Asn228, and Ser271 each coordinate isopentenyl diphosphate.

It belongs to the IspH family. The cofactor is [4Fe-4S] cluster.

It carries out the reaction isopentenyl diphosphate + 2 oxidized [2Fe-2S]-[ferredoxin] + H2O = (2E)-4-hydroxy-3-methylbut-2-enyl diphosphate + 2 reduced [2Fe-2S]-[ferredoxin] + 2 H(+). The enzyme catalyses dimethylallyl diphosphate + 2 oxidized [2Fe-2S]-[ferredoxin] + H2O = (2E)-4-hydroxy-3-methylbut-2-enyl diphosphate + 2 reduced [2Fe-2S]-[ferredoxin] + 2 H(+). The protein operates within isoprenoid biosynthesis; dimethylallyl diphosphate biosynthesis; dimethylallyl diphosphate from (2E)-4-hydroxy-3-methylbutenyl diphosphate: step 1/1. It participates in isoprenoid biosynthesis; isopentenyl diphosphate biosynthesis via DXP pathway; isopentenyl diphosphate from 1-deoxy-D-xylulose 5-phosphate: step 6/6. Catalyzes the conversion of 1-hydroxy-2-methyl-2-(E)-butenyl 4-diphosphate (HMBPP) into a mixture of isopentenyl diphosphate (IPP) and dimethylallyl diphosphate (DMAPP). Acts in the terminal step of the DOXP/MEP pathway for isoprenoid precursor biosynthesis. The sequence is that of 4-hydroxy-3-methylbut-2-enyl diphosphate reductase from Geobacillus kaustophilus (strain HTA426).